A 194-amino-acid chain; its full sequence is Probable GTP-binding protein EngB (194 aa).

One can recognise an EngB-type G domain in the interval 22–194; the sequence is PLPEVALAGR…AWKAILHAIS (173 aa). GTP is bound by residues 30–37, 57–61, 75–78, 142–145, and 174–176; these read GRSNVGKS, GKTQT, DVPG, TKCD, and FSS. Residues serine 37 and threonine 59 each coordinate Mg(2+).

Belongs to the TRAFAC class TrmE-Era-EngA-EngB-Septin-like GTPase superfamily. EngB GTPase family. Mg(2+) serves as cofactor.

In terms of biological role, necessary for normal cell division and for the maintenance of normal septation. This chain is Probable GTP-binding protein EngB, found in Halalkalibacterium halodurans (strain ATCC BAA-125 / DSM 18197 / FERM 7344 / JCM 9153 / C-125) (Bacillus halodurans).